A 298-amino-acid chain; its full sequence is Acetylglutamate kinase (298 aa).

Substrate-binding positions include 73-74, R95, and N188; that span reads GG.

Belongs to the acetylglutamate kinase family. ArgB subfamily.

The protein localises to the cytoplasm. It carries out the reaction N-acetyl-L-glutamate + ATP = N-acetyl-L-glutamyl 5-phosphate + ADP. The protein operates within amino-acid biosynthesis; L-arginine biosynthesis; N(2)-acetyl-L-ornithine from L-glutamate: step 2/4. Its function is as follows. Catalyzes the ATP-dependent phosphorylation of N-acetyl-L-glutamate. The sequence is that of Acetylglutamate kinase from Nostoc punctiforme (strain ATCC 29133 / PCC 73102).